The chain runs to 260 residues: Vesicle-associated membrane protein 7B (260 aa).

The Cytoplasmic portion of the chain corresponds to 1-189 (MPIIYSLVAR…KCAMWWKNVK (189 aa)). Positions 7-110 (LVARGSSVLA…GMNSDFSRTL (104 aa)) constitute a Longin domain. One can recognise a v-SNARE coiled-coil homology domain in the interval 125–186 (TMSRTMAEID…KQLKCAMWWK (62 aa)). A helical; Anchor for type IV membrane protein transmembrane segment spans residues 190-210 (LMLVLGAIVLIIIFIIVMSYC). Residues 211-260 (DGFRSGSKCRSSPSSNSTPTPTPTETPTPTPTPTSTPTPSQLLETLLNQF) are Vesicular-facing. Residues 215-250 (SGSKCRSSPSSNSTPTPTPTETPTPTPTPTSTPTPS) form a disordered region. Over residues 230–246 (TPTPTETPTPTPTPTST) the composition is skewed to pro residues.

The protein belongs to the synaptobrevin family.

The protein localises to the cytoplasmic vesicle. Its subcellular location is the secretory vesicle membrane. The protein resides in the golgi apparatus. It localises to the trans-Golgi network membrane. It is found in the late endosome membrane. The protein localises to the lysosome membrane. Its subcellular location is the endoplasmic reticulum membrane. The protein resides in the phagosome membrane. Involved in the targeting and/or fusion of transport vesicles to their target membrane during transport of proteins from the early endosome to the lysosome. Required for heterotypic fusion of late endosomes with lysosomes and homotypic lysosomal fusion. The protein is Vesicle-associated membrane protein 7B of Dictyostelium discoideum (Social amoeba).